We begin with the raw amino-acid sequence, 140 residues long: Putative pre-16S rRNA nuclease (140 aa).

The protein belongs to the YqgF nuclease family.

It is found in the cytoplasm. Its function is as follows. Could be a nuclease involved in processing of the 5'-end of pre-16S rRNA. The polypeptide is Putative pre-16S rRNA nuclease (Mannheimia succiniciproducens (strain KCTC 0769BP / MBEL55E)).